The following is a 611-amino-acid chain: Leucine aminopeptidase (611 aa).

Substrate is bound by residues 129–131 and 278–282; these read QCQ and GGMEN. Histidine 305 contacts Zn(2+). Glutamate 306 serves as the catalytic Proton acceptor. Zn(2+) is bound by residues histidine 309 and glutamate 328. The active-site Proton donor is tyrosine 393. A substrate-binding site is contributed by 562-564; sequence RMK.

It belongs to the peptidase M1 family. Zn(2+) serves as cofactor.

It localises to the cytoplasm. The enzyme catalyses an epoxide + H2O = an ethanediol. Its function is as follows. Aminopeptidase that preferentially cleaves di- and tripeptides. Also has low epoxide hydrolase activity (in vitro). Can hydrolyze the epoxide leukotriene LTA(4) but it forms preferentially 5,6-dihydroxy-7,9,11,14-eicosatetraenoic acid rather than the cytokine leukotriene B(4) as the product compared to the homologous mammalian enzyme (in vitro). The chain is Leucine aminopeptidase (LKHA4) from Oryza sativa subsp. japonica (Rice).